Reading from the N-terminus, the 209-residue chain is Thymidylate kinase (209 aa).

Residue 10 to 17 (GLDGAGKS) participates in ATP binding.

It belongs to the thymidylate kinase family.

It catalyses the reaction dTMP + ATP = dTDP + ADP. Phosphorylation of dTMP to form dTDP in both de novo and salvage pathways of dTTP synthesis. This chain is Thymidylate kinase, found in Francisella tularensis subsp. holarctica (strain FTNF002-00 / FTA).